The sequence spans 405 residues: Cytochrome b (405 aa).

The helical transmembrane segment at 44 to 64 (FGSLAGIAMIIMIATGIFLAM) threads the bilayer. The heme b site is built by His-94 and His-108. 8 helical membrane-spanning segments follow: residues 97 to 117 (GASMFFIVVYVHMFRGLYYGS), 124 to 144 (VLWWLGLVILLLMMATAFMGY), 163 to 183 (FSAIPVVGDDIVTLLWGGFSV), 191 to 211 (FFSLHYLFPMLLFAVVFLHMW), 245 to 265 (FGLGIFLMVFCFFVFFAPNFF), 303 to 323 (LGGVLAMFGAILILFVLPWLD), 338 to 358 (GFFWVFLADCLLLGYLGAMPA), and 368 to 388 (LATIYYFLHFLVITPLVGWFE). Residues His-195 and His-209 each coordinate heme b.

It belongs to the cytochrome b family. As to quaternary structure, the main subunits of complex b-c1 are: cytochrome b, cytochrome c1 and the Rieske protein. The cofactor is heme b.

It is found in the cell membrane. Its function is as follows. Component of the ubiquinol-cytochrome c reductase complex (complex III or cytochrome b-c1 complex), which is a respiratory chain that generates an electrochemical potential coupled to ATP synthesis. The sequence is that of Cytochrome b (petB) from Rhodospirillum rubrum.